Reading from the N-terminus, the 87-residue chain is MKKDIHPEYREVVFQDISTDFSFLTRSTVKTDETITWQDGNEYPLVKIEVSSRSHPFFTGKQRVVHSGGQVDRFRKRFGMTRGSSSQ.

This sequence belongs to the bacterial ribosomal protein bL31 family. Type B subfamily. In terms of assembly, part of the 50S ribosomal subunit.

In Halorhodospira halophila (strain DSM 244 / SL1) (Ectothiorhodospira halophila (strain DSM 244 / SL1)), this protein is Large ribosomal subunit protein bL31B.